The sequence spans 333 residues: Type II secretion system protein K (333 aa).

A propeptide spans 1-7 (leader sequence); the sequence is MRRGQNG. Residues 8-29 traverse the membrane as a helical segment; that stretch reads VALITVLLVVAVVTIVCAGLII. The Periplasmic portion of the chain corresponds to 30–333; sequence RQQLAIRSSA…GGDDWKKDER (304 aa). The interval 313-333 is disordered; it reads MGQGGLPIPSTGGDDWKKDER.

This sequence belongs to the GSP K family. Type II secretion is composed of four main components: the outer membrane complex, the inner membrane complex, the cytoplasmic secretion ATPase and the periplasm-spanning pseudopilus. Interacts with the tip of the type II pseudopilus subunits XcpV, XcpU and XcpW. Interacts with core component XcpT. In terms of processing, cleaved by prepilin peptidase.

The protein localises to the cell inner membrane. Functionally, component of the type II secretion system required for the energy-dependent secretion of extracellular factors such as proteases and toxins from the periplasm. Plays a role in pseudopilus assembly and seems to control its length. Interacts with the pseudopilus tip complex that is critical for the recognition and binding of secretion substrates. Type II pseudopilus confers increased bacterial adhesive capabilities. The protein is Type II secretion system protein K (xcpX) of Pseudomonas aeruginosa (strain ATCC 15692 / DSM 22644 / CIP 104116 / JCM 14847 / LMG 12228 / 1C / PRS 101 / PAO1).